A 106-amino-acid chain; its full sequence is Nucleoid-associated protein Nham_0463 (106 aa).

Belongs to the YbaB/EbfC family. As to quaternary structure, homodimer.

Its subcellular location is the cytoplasm. The protein resides in the nucleoid. In terms of biological role, binds to DNA and alters its conformation. May be involved in regulation of gene expression, nucleoid organization and DNA protection. The sequence is that of Nucleoid-associated protein Nham_0463 from Nitrobacter hamburgensis (strain DSM 10229 / NCIMB 13809 / X14).